Here is a 300-residue protein sequence, read N- to C-terminus: MAEKPQLVNNLPEDVETDECMNKYTHIYSPDLLSDQVAFITGGGSGIGFRIAEVLMRHGCDTVIASRNLEKISQAAKKLTSTTGRRCLPIAMDVRQPETILAAVDETLKTFGRVDILINNAAGNFLCPATSLSFNAFKTVMEIDTMGTFNTSKVIYDKWFKDHGGSIVNISATLGYRGQALQVHAGSAKAANDAMTRHLAVEWGPSGVRVNTVAPGPISGTEGYRRLGGSHAETAGAFHSIPLQRAGNKTEMAHAVLFLASRASSYVTGSVLVADGGAWLTSANDVERLLGIVSSRSAKL.

NADP(+) contacts are provided by residues 42-47, 67-71, and D93; these read GGGSGI and RNLEK. Substrate is bound at residue R67. Substrate-binding positions include R95, F125, and 133-135; that span reads SFN. Residues K189 and 215-221 contribute to the NADP(+) site; that span reads PGPISGT. Position 226 (R226) interacts with substrate. The Microbody targeting signal motif lies at 298–300; that stretch reads AKL.

Belongs to the short-chain dehydrogenases/reductases (SDR) family. 2,4-dienoyl-CoA reductase subfamily. Monomer, dimer and oligomer.

Its subcellular location is the peroxisome. It carries out the reaction a (2E,4Z)-dienoyl-CoA + NADPH + H(+) = a 4,5-saturated-(3E)-enoyl-CoA + NADP(+). The enzyme catalyses a (2E,4E)-dienoyl-CoA + NADPH + H(+) = a 4,5-saturated-(3E)-enoyl-CoA + NADP(+). It catalyses the reaction (2E,4E)-hexadienoyl-CoA + NADPH + H(+) = (3E)-hexenoyl-CoA + NADP(+). The catalysed reaction is (2E,4E)-decadienoyl-CoA + NADPH + H(+) = (3E)-decenoyl-CoA + NADP(+). It carries out the reaction (2E,4Z,7Z,10Z,13Z,16Z,19Z)-docosaheptaenoyl-CoA + NADPH + H(+) = (3E,7Z,10Z,13Z,16Z,19Z)-docosahexaenoyl-CoA + NADP(+). Auxiliary enzyme of beta-oxidation. Participates in the degradation of unsaturated fatty enoyl-CoA esters having double bonds in both even- and odd-numbered positions in peroxisome. Catalyzes the NADP-dependent reduction of 2,4-dienoyl-CoA to yield trans-3-enoyl-CoA. This chain is Peroxisomal 2,4-dienoyl-CoA reductase [(3E)-enoyl-CoA-producing] (decr2), found in Danio rerio (Zebrafish).